A 465-amino-acid polypeptide reads, in one-letter code: Phospholipase A1-II 5 (465 aa).

The active-site Acyl-ester intermediate is the Ser233. Active-site charge relay system residues include Ser233, Asp297, and His336.

It belongs to the AB hydrolase superfamily. Lipase family.

The protein resides in the cytoplasm. Acylhydrolase that catalyzes the hydrolysis of phospholipids at the sn-1 position. The sequence is that of Phospholipase A1-II 5 from Oryza sativa subsp. indica (Rice).